Consider the following 205-residue polypeptide: ATP-dependent Clp protease proteolytic subunit (205 aa).

S109 acts as the Nucleophile in catalysis. Residue H134 is part of the active site.

It belongs to the peptidase S14 family. In terms of assembly, fourteen ClpP subunits assemble into 2 heptameric rings which stack back to back to give a disk-like structure with a central cavity, resembling the structure of eukaryotic proteasomes.

Its subcellular location is the cytoplasm. It carries out the reaction Hydrolysis of proteins to small peptides in the presence of ATP and magnesium. alpha-casein is the usual test substrate. In the absence of ATP, only oligopeptides shorter than five residues are hydrolyzed (such as succinyl-Leu-Tyr-|-NHMec, and Leu-Tyr-Leu-|-Tyr-Trp, in which cleavage of the -Tyr-|-Leu- and -Tyr-|-Trp bonds also occurs).. In terms of biological role, cleaves peptides in various proteins in a process that requires ATP hydrolysis. Has a chymotrypsin-like activity. Plays a major role in the degradation of misfolded proteins. This chain is ATP-dependent Clp protease proteolytic subunit, found in Baumannia cicadellinicola subsp. Homalodisca coagulata.